Here is a 1214-residue protein sequence, read N- to C-terminus: Brassinosteroid LRR receptor kinase BRL3 (1214 aa).

Positions 1-29 are cleaved as a signal peptide; the sequence is MAAVRVVAPAPSVLLLVAAAVVLLHLARA. N-linked (GlcNAc...) asparagine glycosylation is present at asparagine 61. The short motif at 69–76 is the Cys pair 1 element; it reads CAWAGVSC. LRR repeat units follow at residues 103 to 127, 131 to 155, 156 to 177, 178 to 202, 204 to 228, 230 to 250, 252 to 276, 277 to 302, 303 to 325, 327 to 351, 353 to 375, 377 to 400, 401 to 427, 429 to 451, 452 to 476, 478 to 500, 502 to 525, 526 to 549, 550 to 572, 573 to 597, 599 to 621, and 650 to 673; these read LSALRRLDLRGNAFHGDLSRHGSPR, PCALVEVDISSNTFNGTLPRAFLAS, CGGLQTLNLSRNSLTGGGYPFP, PSLRRLDMSRNQLSDAGLLNYSLTG, HGIQYLNLSANQFTGSLPGLAPCTE, SVLDLSWNLMSGVLPPRFVAM, PANLTYLSIAGNNFSMDISDYEFGG, CANLTLLDWSYNRLRSTGLPRSLVDC, RRLEALDMSGNKLLSGPIPTFLV, LQALRRLSLAGNRFTGEISDKLSIL, KTLVELDLSSNQLIGSLPASFGQ, RFLQVLDLGNNQLSGDFVETVITN, ISSLRVLRLPFNNITGANPLPALASRC, LLEVIDLGSNEFDGEIMPDLCSS, LPSLRKLLLPNNYINGTVPSSLSNC, NLESIDLSFNLLVGQIPPEILFL, KLVDLVLWANNLSGEIPDKFCFNS, TALETLVISYNSFTGNIPESITRC, VNLIWLSLAGNNLTGSIPSGFGN, LQNLAILQLNKNSLSGKVPAELGSC, NLIWLDLNSNELTGTIPPQLAAQ, and GVLFEFLDIRPDRLANFPAVHLCS. Asparagine 145, asparagine 163, asparagine 197, and asparagine 210 each carry an N-linked (GlcNAc...) asparagine glycan. Asparagine 254, asparagine 264, and asparagine 279 each carry an N-linked (GlcNAc...) asparagine glycan. 2 N-linked (GlcNAc...) asparagine glycosylation sites follow: asparagine 400 and asparagine 413. Asparagine 466 is a glycosylation site (N-linked (GlcNAc...) asparagine). N-linked (GlcNAc...) asparagine glycosylation is found at asparagine 512 and asparagine 524. Residue asparagine 561 is glycosylated (N-linked (GlcNAc...) asparagine). Tyrosine 678 contributes to the brassinolide binding site. LRR repeat units lie at residues 689–712, 713–736, 738–760, and 762–786; these read NGSMIFLDLSYNSLTGTIPASFGN, MTYLEVLNLGHNELTGAIPDAFTG, KGIGALDLSHNHLTGVIPPGFGC, and HFLADFDVSNNNLTGEIPTSGQLIT. The Cys pair 2 signature appears at 799–806; the sequence is CGIPLNPC. Residues 829–849 traverse the membrane as a helical segment; sequence SVFLAVTLSVLILFSLLIIHY. Residues 913-1196 form the Protein kinase domain; sequence FCAETLIGSG…FQVDSGSNFL (284 aa). Residues 919–927, lysine 941, 987–989, 993–996, 1039–1044, and aspartate 1057 each bind ATP; these read IGSGGFGEV, EYM, SLDF, and DMKSSN. Aspartate 1039 serves as the catalytic Proton acceptor.

Belongs to the protein kinase superfamily. Ser/Thr protein kinase family. In terms of tissue distribution, highly expressed in roots. Expressed at low levels in shoots.

The protein localises to the cell membrane. It catalyses the reaction L-seryl-[protein] + ATP = O-phospho-L-seryl-[protein] + ADP + H(+). The enzyme catalyses L-threonyl-[protein] + ATP = O-phospho-L-threonyl-[protein] + ADP + H(+). Its function is as follows. May be involved in brassenosteroid (BR) perception in roots. The protein is Brassinosteroid LRR receptor kinase BRL3 of Oryza sativa subsp. japonica (Rice).